The sequence spans 857 residues: Zinc finger protein 574 (857 aa).

C2H2-type zinc fingers lie at residues 15 to 37 (YVCS…QQSH), 58 to 80 (YQCL…QELH), 99 to 121 (YECP…RYTH), 206 to 228 (YKCS…QGTH), 297 to 319 (FSCG…QISH), 324 to 346 (FSCP…LKSH), 352 to 374 (YLCV…RRSH), 380 to 401 (FTCE…RRVH), 428 to 451 (FHCD…RFVH), 457 to 479 (HKCP…MLTH), 485 to 507 (YSCT…RLTH), 513 to 535 (YKCQ…QYVH), 541 to 563 (YKCN…QYHH), and 569 to 591 (YKCQ…QLGH). The C2H2-type 15; degenerate zinc finger occupies 597–619 (HRCRECGTNFPSVQRLQDHRCSK). 5 C2H2-type zinc fingers span residues 628 to 651 (LECP…AAQH), 681 to 703 (LECS…RRIH), 709 to 731 (YPCP…RRLH), 737 to 759 (FKCD…KRIH), and 765 to 787 (HSCP…RKLH). The segment at 648 to 678 (AAQHSGNKRSNVSSGKGTPVLPRNKLKGGGG) is disordered. Residues 651 to 663 (HSGNKRSNVSSGK) are compositionally biased toward polar residues.

It belongs to the krueppel C2H2-type zinc-finger protein family.

It is found in the nucleus. In terms of biological role, may be involved in transcriptional regulation. The protein is Zinc finger protein 574 (znf574) of Xenopus tropicalis (Western clawed frog).